The following is a 93-amino-acid chain: Small ribosomal subunit protein uS19 (93 aa).

Belongs to the universal ribosomal protein uS19 family.

Protein S19 forms a complex with S13 that binds strongly to the 16S ribosomal RNA. The polypeptide is Small ribosomal subunit protein uS19 (Lacticaseibacillus paracasei (strain ATCC 334 / BCRC 17002 / CCUG 31169 / CIP 107868 / KCTC 3260 / NRRL B-441) (Lactobacillus paracasei)).